We begin with the raw amino-acid sequence, 185 residues long: Elongation factor P (185 aa).

It belongs to the elongation factor P family.

It localises to the cytoplasm. The protein operates within protein biosynthesis; polypeptide chain elongation. Involved in peptide bond synthesis. Stimulates efficient translation and peptide-bond synthesis on native or reconstituted 70S ribosomes in vitro. Probably functions indirectly by altering the affinity of the ribosome for aminoacyl-tRNA, thus increasing their reactivity as acceptors for peptidyl transferase. This is Elongation factor P from Streptococcus uberis (strain ATCC BAA-854 / 0140J).